Consider the following 582-residue polypeptide: Potassium voltage-gated channel subfamily KQT member 1 (582 aa).

Over 1–31 the chain is Cytoplasmic; it reads RVSIYSARRPLLARTHIQGRVYNFLERPTGW. The helical transmembrane segment at 32 to 53 threads the bilayer; that stretch reads KCFVYHFAVFLIVLVCLIFSVL. Topologically, residues 54–64 are extracellular; the sequence is STIEQYVALAT. A helical membrane pass occupies residues 65–87; sequence GTLFWMEIVLVVFFGTEYVVRLW. The Cytoplasmic segment spans residues 88 to 103; sequence SAGCRSKYVGVWGRLR. A helical transmembrane segment spans residues 104–129; sequence FARKPISIIDLIVVLASMVVLCVGSK. Topologically, residues 130–137 are extracellular; the sequence is GQVFATSA. Residues 138-153 form a helical; Voltage-sensor membrane-spanning segment; the sequence is IRGIRFLQILRMLHVD. The tract at residues 149-157 is interaction with KCNE3; it reads MLHVDRQGG. The Cytoplasmic segment spans residues 154 to 171; it reads RQGGTWRLLGSVVFIHRQ. Residue glutamine 155 participates in a 1,2-diacyl-sn-glycero-3-phospho-(1D-myo-inositol-4,5-bisphosphate) binding. A helical transmembrane segment spans residues 172–194; it reads ELITTLYIGFLGLIFSSYFVYLA. Residues 195 to 210 are Extracellular-facing; it reads EKDAVNESGQVEFGSY. Asparagine 200 carries an N-linked (GlcNAc...) asparagine glycan. The pore-forming intramembrane region spans 211 to 231; the sequence is ADALWWGVVTVTTIGYGDKVP. Over 232 to 233 the chain is Extracellular; sequence QT. A helical membrane pass occupies residues 234-259; that stretch reads WVGKTIASCFSVFAISFFALPAGILG. Residues 260 to 582 lie on the Cytoplasmic side of the membrane; it reads SGFALKVQQK…VPRRGPEEGS (323 aa). The interaction with CALM stretch occupies residues 281 to 293; sequence AAASLIQTAWRCY. A phosphoserine mark is found at serine 318 and serine 320. Positions 426–440 are interaction with CALM; calcium-dependent; sequence KVIRRMQYFVAKKKF. The interaction with KCNE1 C-terminus stretch occupies residues 446 to 483; the sequence is PYDVRDVIEQYSQGHLNLMVRIKELQRRLDQSIGKPSL. A coiled-coil region spans residues 496–532; that stretch reads SNTIGARLNRVEDKVAQLDQRLVLITDMLQQLLSLHH. Residues 499–527 are interaction with AKAP9; sequence IGARLNRVEDKVAQLDQRLVLITDMLQQL. The segment at 500–531 is C-terminal assembly domain (tetramerization); that stretch reads GARLNRVEDKVAQLDQRLVLITDMLQQLLSLH. The disordered stretch occupies residues 530-582; the sequence is LHHGGPPGSRPPSGGGAQVQPCGPTNPELFLPGNALPTYEQLTVPRRGPEEGS.

Belongs to the potassium channel family. KQT (TC 1.A.1.15) subfamily. Kv7.1/KCNQ1 sub-subfamily. As to quaternary structure, tetramer. Heterotetramer with KCNE1; targets to the membrane raft. Interacts (via C-terminus) with CALM; forms a heterooctameric structure (with 4:4 KCNQ1:CALM stoichiometry) in a calcium-independent manner. Interacts with AKAP9; targets protein kinase A (PKA) catalytic and regulatory subunits and protein phosphatase 1 (PP1) to the KCNQ1-KCNE1 complex, allowing PKA-mediated phosphorylation and increase of delayed rectifier potassium channel activity. Interacts with KCNE2; form a heterooligomer complex that targets to the membrane raft and leading to currents with an apparently instantaneous activation, a rapid deactivation process and a linear current-voltage relationship and decreases the amplitude of the outward current. Interacts with AP2M1; mediates estrogen-induced internalization via clathrin-coated vesicles. Interacts with NEDD4L; promotes internalization and decreases I(Ks) currents. Interacts with USP2; counteracts the NEDD4L-specific down-regulation of I(Ks) and restore plasma membrane localization. Heterotetramer with KCNQ5; has a voltage-gated potassium channel activity. Interacts with KCNE3; four KCNE3 molecules are bound to one KCNQ1 tetramer (4:4 KCNQ1:KCNE3 stoichiometry); alters membrane raft localization; affects KCNQ1 structure and gating properties. Interacts with KCNE4; impairs KCNQ1 localization in lipid rafts and inhibits voltage-gated potassium channel activity. Interacts with KCNE5; impairs KCNQ1 localization in lipid rafts and only conducts current upon strong and continued depolarization. In terms of processing, phosphorylated by PKA; increases delayed rectifier potassium channel activity of the KCNQ1-KCNE1 complex through a macromolecular complex that includes PKA, PP1, and the targeting protein AKAP9. Post-translationally, ubiquitinated by NEDD4L; promotes internalization. The ubiquitinylated form is internalized through a clathrin-mediated endocytosis by interacting with AP2M1 and is recycled back to the cell membrane via RAB4A and RAB11A. Deubiquitinated by USP2; counteracts the NEDD4L-specific down-regulation of I(Ks) and restores the membrane localization.

The protein localises to the cell membrane. The protein resides in the cytoplasmic vesicle membrane. It is found in the early endosome. It localises to the membrane raft. Its subcellular location is the endoplasmic reticulum. The protein localises to the basolateral cell membrane. It catalyses the reaction K(+)(in) = K(+)(out). Its activity is regulated as follows. PIP2 molecule is essential to activate KCNQ channels by inducing the coupling of the voltage-sensing domain (VSD) and the pore-forming domain (PD). Upon channel activation, PIP2 disrupts the VSD-calmodulin/CALM interactions, causing the release of CALM from the VSD which triggers the opening of the gate. Calcium potentiates KCNQ1 channel current through calcium-bound CALM. Calcium-bound CALM competes with PIP2 to stabilize the channel open state. Pore-forming subunit of the voltage-gated potassium (Kv) channel involved in the regulation of cardiomyocyte excitability and important in normal development and functions of myocardium, inner ear, stomach and colon. Associates with KCNE beta subunits that modulates current kinetics. Induces a voltage-dependent by rapidly activating and slowly deactivating potassium-selective outward current. Also promotes a delayed voltage activated potassium current showing outward rectification characteristic. During beta-adrenergic receptor stimulation participates in cardiac repolarization by associating with KCNE1 to form the I(Ks) cardiac potassium current that increases the amplitude and slows down the activation kinetics of outward potassium current I(Ks). Muscarinic agonist oxotremorine-M strongly suppresses KCNQ1/KCNE1 current. When associated with KCNE3, forms the potassium channel that is important for cyclic AMP-stimulated intestinal secretion of chloride ions. This interaction with KCNE3 is reduced by 17beta-estradiol, resulting in the reduction of currents. During conditions of increased substrate load, maintains the driving force for proximal tubular and intestinal sodium ions absorption, gastric acid secretion, and cAMP-induced jejunal chloride ions secretion. Allows the provision of potassium ions to the luminal membrane of the secretory canaliculus in the resting state as well as during stimulated acid secretion. When associated with KCNE2, forms a heterooligomer complex leading to currents with an apparently instantaneous activation, a rapid deactivation process and a linear current-voltage relationship and decreases the amplitude of the outward current. When associated with KCNE4, inhibits voltage-gated potassium channel activity. When associated with KCNE5, this complex only conducts current upon strong and continued depolarization. Also forms a heterotetramer with KCNQ5 that has a voltage-gated potassium channel activity. Binds with phosphatidylinositol 4,5-bisphosphate. The sequence is that of Potassium voltage-gated channel subfamily KQT member 1 from Felis catus (Cat).